The primary structure comprises 139 residues: Hydrogenase maturation factor HypA (139 aa).

Residue His-2 coordinates Ni(2+). Positions 73, 76, 110, and 113 each coordinate Zn(2+).

It belongs to the HypA/HybF family.

In terms of biological role, involved in the maturation of [NiFe] hydrogenases. Required for nickel insertion into the metal center of the hydrogenase. The protein is Hydrogenase maturation factor HypA of Pyrococcus furiosus (strain ATCC 43587 / DSM 3638 / JCM 8422 / Vc1).